Here is a 204-residue protein sequence, read N- to C-terminus: Tat proofreading chaperone DmsD (204 aa).

Belongs to the TorD/DmsD family. DmsD subfamily.

In terms of biological role, required for biogenesis/assembly of DMSO reductase, but not for the interaction of the DmsA signal peptide with the Tat system. May be part of a chaperone cascade complex that facilitates a folding-maturation pathway for the substrate protein. The polypeptide is Tat proofreading chaperone DmsD (Escherichia coli O157:H7).